The sequence spans 340 residues: Anthranilate phosphoribosyltransferase (340 aa).

5-phospho-alpha-D-ribose 1-diphosphate contacts are provided by residues G79, 82–83, T87, 89–92, 107–115, and S119; these read GD, NIST, and KHGNRAVTG. G79 contributes to the anthranilate binding site. Residue S91 participates in Mg(2+) binding. N110 provides a ligand contact to anthranilate. Position 165 (R165) interacts with anthranilate. Positions 224 and 225 each coordinate Mg(2+).

It belongs to the anthranilate phosphoribosyltransferase family. As to quaternary structure, homodimer. Requires Mg(2+) as cofactor.

The enzyme catalyses N-(5-phospho-beta-D-ribosyl)anthranilate + diphosphate = 5-phospho-alpha-D-ribose 1-diphosphate + anthranilate. Its pathway is amino-acid biosynthesis; L-tryptophan biosynthesis; L-tryptophan from chorismate: step 2/5. In terms of biological role, catalyzes the transfer of the phosphoribosyl group of 5-phosphorylribose-1-pyrophosphate (PRPP) to anthranilate to yield N-(5'-phosphoribosyl)-anthranilate (PRA). The polypeptide is Anthranilate phosphoribosyltransferase (Syntrophomonas wolfei subsp. wolfei (strain DSM 2245B / Goettingen)).